Consider the following 326-residue polypeptide: Adenosine receptor A1 (326 aa).

The Extracellular portion of the chain corresponds to 1–10; the sequence is MPPYISAFQA. Residues 11-33 traverse the membrane as a helical segment; sequence AYIGIEVLIALVSVPGNVLVIWA. The Cytoplasmic portion of the chain corresponds to 34–46; it reads VKVNQALRDATFC. Residues 47-69 form a helical membrane-spanning segment; sequence FIVSLAVADVAVGALVIPLAILI. Residues 70-80 are Extracellular-facing; that stretch reads NIGPQTYFHTC. A disulfide bridge connects residues cysteine 80 and cysteine 169. A helical transmembrane segment spans residues 81–102; that stretch reads LMVACPVLILTQSSILALLAIA. The Cytoplasmic segment spans residues 103 to 123; the sequence is VDRYLRVKIPLRYKTVVTQRR. A helical membrane pass occupies residues 124-146; it reads AAVAIAGCWILSLVVGLTPMFGW. Topologically, residues 147 to 176 are extracellular; sequence NNLSVVEQDWRANGSVGEPVIKCEFEKVIS. Asparagine 148 and asparagine 159 each carry an N-linked (GlcNAc...) asparagine glycan. The chain crosses the membrane as a helical span at residues 177–201; sequence MEYMVYFNFFVWVLPPLLLMVLIYL. Over 202–235 the chain is Cytoplasmic; that stretch reads EVFYLIRKQLNKKVSASSGDPQKYYGKELKIAKS. A helical transmembrane segment spans residues 236–259; the sequence is LALILFLFALSWLPLHILNCITLF. Topologically, residues 260-267 are extracellular; that stretch reads CPTCQKPS. A helical transmembrane segment spans residues 268-292; the sequence is ILIYIAIFLTHGNSAMNPIVYAFRI. At 293–326 the chain is on the cytoplasmic side; sequence HKFRVTFLKIWNDHFRCQPKPPIDEDLPEEKAED. Cysteine 309 carries the S-palmitoyl cysteine lipid modification.

This sequence belongs to the G-protein coupled receptor 1 family. As to expression, widely expressed in brain and spinal cord.

The protein localises to the cell membrane. In terms of biological role, receptor for adenosine. The activity of this receptor is mediated by G proteins which inhibit adenylyl cyclase. The chain is Adenosine receptor A1 (Adora1) from Rattus norvegicus (Rat).